The following is a 247-amino-acid chain: Eukaryotic translation initiation factor 6 (247 aa).

A phosphoserine; by CK1 mark is found at serine 174 and serine 175.

The protein belongs to the eIF-6 family. As to quaternary structure, monomer. Associates with the 60S ribosomal subunit. Phosphorylation at Ser-174 and Ser-175 promotes nuclear export.

The protein localises to the cytoplasm. The protein resides in the nucleus. Its subcellular location is the nucleolus. Binds to the 60S ribosomal subunit and prevents its association with the 40S ribosomal subunit to form the 80S initiation complex in the cytoplasm. Is also involved in ribosome biogenesis. Associates with pre-60S subunits in the nucleus and is involved in its nuclear export. This Aspergillus oryzae (strain ATCC 42149 / RIB 40) (Yellow koji mold) protein is Eukaryotic translation initiation factor 6 (tif6).